We begin with the raw amino-acid sequence, 432 residues long: D-amino acid dehydrogenase (432 aa).

3–17 provides a ligand contact to FAD; sequence VVILGSGVVGVTSAW.

Belongs to the DadA oxidoreductase family. FAD serves as cofactor.

The enzyme catalyses a D-alpha-amino acid + A + H2O = a 2-oxocarboxylate + AH2 + NH4(+). Its pathway is amino-acid degradation; D-alanine degradation; NH(3) and pyruvate from D-alanine: step 1/1. Functionally, oxidative deamination of D-amino acids. The polypeptide is D-amino acid dehydrogenase (Salmonella choleraesuis (strain SC-B67)).